A 32-amino-acid polypeptide reads, in one-letter code: Photosystem I reaction center subunit XII (32 aa).

A helical transmembrane segment spans residues 10–27 (VVALVSAFVTGILALRLG).

The protein belongs to the PsaM family.

The protein localises to the plastid. The protein resides in the chloroplast thylakoid membrane. This chain is Photosystem I reaction center subunit XII, found in Staurastrum punctulatum (Green alga).